Reading from the N-terminus, the 290-residue chain is UPF0761 membrane protein YihY (290 aa).

6 helical membrane passes run 44–64 (LLSL…FPMF), 104–124 (VGAC…DSAL), 140–160 (FAVY…SLAI), 183–203 (IFPL…VPTI), 210–230 (AIVG…GFAL), and 244–264 (VLAV…IVLL).

This sequence belongs to the UPF0761 family.

It is found in the cell inner membrane. The protein is UPF0761 membrane protein YihY of Escherichia coli O127:H6 (strain E2348/69 / EPEC).